The sequence spans 109 residues: Nucleoid-associated protein SG0690 (109 aa).

Residues 1 to 23 are disordered; sequence MFGKGGMGNLMKQAQQMQEKMQR.

Belongs to the YbaB/EbfC family. Homodimer.

The protein resides in the cytoplasm. Its subcellular location is the nucleoid. Binds to DNA and alters its conformation. May be involved in regulation of gene expression, nucleoid organization and DNA protection. The protein is Nucleoid-associated protein SG0690 of Sodalis glossinidius (strain morsitans).